A 176-amino-acid polypeptide reads, in one-letter code: ATP-dependent protease subunit HslV (176 aa).

Residue T6 is part of the active site. Na(+) is bound by residues S161, C164, and T167.

Belongs to the peptidase T1B family. HslV subfamily. A double ring-shaped homohexamer of HslV is capped on each side by a ring-shaped HslU homohexamer. The assembly of the HslU/HslV complex is dependent on binding of ATP.

It is found in the cytoplasm. It carries out the reaction ATP-dependent cleavage of peptide bonds with broad specificity.. Allosterically activated by HslU binding. Functionally, protease subunit of a proteasome-like degradation complex believed to be a general protein degrading machinery. The chain is ATP-dependent protease subunit HslV from Aquifex aeolicus (strain VF5).